Consider the following 254-residue polypeptide: tRNA uridine(34) hydroxylase (254 aa).

One can recognise a Rhodanese domain in the interval Gln123–Ser217. The active-site Cysteine persulfide intermediate is the Cys177.

Belongs to the TrhO family.

It catalyses the reaction uridine(34) in tRNA + AH2 + O2 = 5-hydroxyuridine(34) in tRNA + A + H2O. Functionally, catalyzes oxygen-dependent 5-hydroxyuridine (ho5U) modification at position 34 in tRNAs. The chain is tRNA uridine(34) hydroxylase from Legionella pneumophila (strain Lens).